The sequence spans 66 residues: Myrmicitoxin(1)-Pr5a (66 aa).

A signal peptide spans 1-25; sequence MRSLYLSFSLTIIFVLVIMHAEAKA. The propeptide occupies 26–37; it reads ISEPNAIAEADP. The residue at position 65 (Val-65) is a Valine amide.

The protein belongs to the formicidae venom clade 3 family. As to expression, expressed by the venom gland.

The protein resides in the secreted. Functionally, toxin that causes a rapid and irreversible paralysis when intrathoracically injected into insects (blowflies). Does not cause spontaneous nocifensive behaviors by intraplantar injection in mice. Exhibits hemolytic and cytotoxic activities on HEK293 cells. The polypeptide is Myrmicitoxin(1)-Pr5a (Pogonomyrmex rugosus (Desert harvester ant)).